A 238-amino-acid polypeptide reads, in one-letter code: Peroxisomal coenzyme A diphosphatase NUDT7 (238 aa).

N6-succinyllysine is present on Lys20. The 136-residue stretch at Tyr37–Asn172 folds into the Nudix hydrolase domain. A Nudix box motif is present at residues Lys77–Gly98. Mg(2+)-binding residues include Glu92 and Glu96. A Microbody targeting signal motif is present at residues Ser236–Leu238.

Belongs to the Nudix hydrolase family. PCD1 subfamily. In terms of assembly, monomer. It depends on Mn(2+) as a cofactor. Mg(2+) serves as cofactor. As to expression, expressed in liver, kidney, pancreas, pituitary, small intestine, spleen, heart and placenta. Weakly expressed in brain.

It is found in the peroxisome. The catalysed reaction is hexanoyl-CoA + H2O = hexanoyl-4'-phosphopantetheine + adenosine 3',5'-bisphosphate + 2 H(+). The enzyme catalyses octanoyl-CoA + H2O = S-octanoyl-4'-phosphopantetheine + adenosine 3',5'-bisphosphate + 2 H(+). It carries out the reaction butanoyl-CoA + H2O = S-butanoyl-4'-phosphopantetheine + adenosine 3',5'-bisphosphate + 2 H(+). It catalyses the reaction decanoyl-CoA + H2O = decanoyl-4'-phosphopantetheine + adenosine 3',5'-bisphosphate + 2 H(+). The catalysed reaction is dodecanoyl-CoA + H2O = S-dodecanoyl-4'-phosphopantetheine + adenosine 3',5'-bisphosphate + 2 H(+). The enzyme catalyses tetradecanoyl-CoA + H2O = tetradecanoyl-4'-phosphopantetheine + adenosine 3',5'-bisphosphate + 2 H(+). It carries out the reaction choloyl-CoA + H2O = S-choloyl-4'-phosphopantetheine + adenosine 3',5'-bisphosphate + 2 H(+). It catalyses the reaction 3alpha,7alpha,12alpha-trihydroxy-5beta-cholestan-26-oyl-CoA + H2O = 3alpha,7alpha,12alpha-trihydroxy-5beta-cholestan-26-oyl-4'-phosphopantetheine + adenosine 3',5'-bisphosphate + 2 H(+). The catalysed reaction is acetyl-CoA + H2O = S-acetyl-4'-phosphopantetheine + adenosine 3',5'-bisphosphate + 2 H(+). The enzyme catalyses CoA + H2O = (R)-4'-phosphopantetheine + adenosine 3',5'-bisphosphate + 2 H(+). It carries out the reaction propanoyl-CoA + H2O = propanoyl-4'-phosphopantetheine + adenosine 3',5'-bisphosphate + 2 H(+). It catalyses the reaction malonyl-CoA + H2O = malonyl-4'-phosphopantetheine + adenosine 3',5'-bisphosphate + 2 H(+). The catalysed reaction is succinyl-CoA + H2O = succinyl-4'-phosphopantetheine + adenosine 3',5'-bisphosphate + 2 H(+). The enzyme catalyses a 5'-end CoA-ribonucleoside in mRNA + H2O = a 5'-end phospho-adenosine-phospho-ribonucleoside in mRNA + (R)-4'-phosphopantetheine + 2 H(+). Its activity is regulated as follows. Inhibited by fluoride. In terms of biological role, fatty acyl-coenzyme A (CoA) diphosphatase that hydrolyzes fatty acyl-CoA to yield acyl-4'-phosphopantetheine and adenosine 3',5'-bisphosphate. Cleaves CoA, CoA esters and oxidized CoA with similar efficiencies. Preferentially hydrolyzes medium-chain acyl-CoAs and bile acid-CoAs. Has no activity toward NDP-sugars, CDP-alcohols, (deoxy)nucleoside 5'-triphosphates, nucleoside 5'-di or monophosphates, diadenosine polyphosphates, NAD, NADH, NADP, NADPH or thymidine-5'-monophospho-p-nitrophenyl ester. May be required to eliminate oxidized CoA from peroxisomes, or regulate CoA and acyl-CoA levels in this organelle in response to metabolic demand. Does not play a role in U8 snoRNA decapping activity. Binds U8 snoRNA. Exhibits decapping activity towards dpCoA-capped RNAs in vitro. In Homo sapiens (Human), this protein is Peroxisomal coenzyme A diphosphatase NUDT7.